Reading from the N-terminus, the 320-residue chain is Cytochrome f (320 aa).

The signal sequence occupies residues 1 to 35; the sequence is MENRNTFSWVKEQMTRSISVSIMIYVITQTSISNA. Positions 36, 56, 59, and 60 each coordinate heme. A helical membrane pass occupies residues 286–306; the sequence is VQGLLFFFASVILAQVFLVLK.

This sequence belongs to the cytochrome f family. As to quaternary structure, the 4 large subunits of the cytochrome b6-f complex are cytochrome b6, subunit IV (17 kDa polypeptide, petD), cytochrome f and the Rieske protein, while the 4 small subunits are PetG, PetL, PetM and PetN. The complex functions as a dimer. It depends on heme as a cofactor.

The protein localises to the plastid. It is found in the chloroplast thylakoid membrane. In terms of biological role, component of the cytochrome b6-f complex, which mediates electron transfer between photosystem II (PSII) and photosystem I (PSI), cyclic electron flow around PSI, and state transitions. The polypeptide is Cytochrome f (Agrostis stolonifera (Creeping bentgrass)).